The following is a 137-amino-acid chain: Lysozyme (137 aa).

Residues 1-20 form the signal peptide; that stretch reads MQRLLGSIVILATVFTFCEA. One can recognise an I-type lysozyme domain in the interval 21 to 135; sequence TISSACLRCI…EKVHQQGCNV (115 aa). Disulfide bonds link Cys-26–Cys-102, Cys-31–Cys-37, Cys-42–Cys-51, Cys-64–Cys-84, Cys-74–Cys-80, and Cys-98–Cys-116. The active-site Proton donor is the Glu-34. The active-site Nucleophile is the Asp-45. 57–63 is a binding site for substrate; the sequence is KENYWED. Substrate is bound by residues Tyr-88 and 109-111; that span reads HNG.

It belongs to the glycosyl hydrolase 22 family. Type-I lysozyme subfamily. Expressed in the basophil cells of the oyster digestive gland.

The protein localises to the secreted. It catalyses the reaction Hydrolysis of (1-&gt;4)-beta-linkages between N-acetylmuramic acid and N-acetyl-D-glucosamine residues in a peptidoglycan and between N-acetyl-D-glucosamine residues in chitodextrins.. Its function is as follows. Has bacteriolytic activity. May play a role in digestion and in the host defense mechanisms against invading microbes. This Magallana gigas (Pacific oyster) protein is Lysozyme (lysoz).